The primary structure comprises 234 residues: Probable transcriptional regulatory protein Psyr_3028 (234 aa).

It belongs to the TACO1 family.

The protein localises to the cytoplasm. This Pseudomonas syringae pv. syringae (strain B728a) protein is Probable transcriptional regulatory protein Psyr_3028.